The following is a 252-amino-acid chain: MWRMRMRLLTGYLVLLALGQLPEHGALGQKYYMNFAFNNNNPDGEGGTGVDGGGGGAGGGAAGPGGGTGDSPHSQEGDGSAATDNPNDDHATSADNSLATDGDAIGKKESGGGSDGKSDSKDSSGGNDATPANGHDDDNDDSDSKDAKDRQDKEEEAGQEGKRTDHSHHSSYEISIDDSFGGRYVRSIYESSESHGHSGSNAGSNQRDNGARESSQENQDAKEVASEAPAQRAGNVPDGPETGAKEDDYEEM.

The signal sequence occupies residues 1–19 (MWRMRMRLLTGYLVLLALG). Residues 42–252 (PDGEGGTGVD…GAKEDDYEEM (211 aa)) form a disordered region. A compositionally biased stretch (gly residues) spans 44–69 (GEGGTGVDGGGGGAGGGAAGPGGGTG). Composition is skewed to basic and acidic residues over residues 104–122 (AIGKKESGGGSDGKSDSKD), 142–153 (SDSKDAKDRQDK), 159–171 (QEGKRTDHSHHSS), and 209–225 (NGARESSQENQDAKEVA).

Seminal fluid.

The protein resides in the secreted. Functionally, responsible for physiological and behavioral changes in mated female flies. The protein is Accessory gland protein Acp32CD (Acp32CD) of Drosophila melanogaster (Fruit fly).